A 575-amino-acid polypeptide reads, in one-letter code: Chaperonin CPN60-1, mitochondrial (575 aa).

The N-terminal 32 residues, 1 to 32 (MHRFATGLASKARLARNGANQIASRSNWRRNY), are a transit peptide targeting the mitochondrion.

The protein belongs to the chaperonin (HSP60) family.

Its subcellular location is the mitochondrion. Functionally, implicated in mitochondrial protein import and macromolecular assembly. May facilitate the correct folding of imported proteins. May also prevent misfolding and promote the refolding and proper assembly of unfolded polypeptides generated under stress conditions in the mitochondrial matrix. The polypeptide is Chaperonin CPN60-1, mitochondrial (CPN60-1) (Cucurbita maxima (Pumpkin)).